Reading from the N-terminus, the 521-residue chain is Caspase-10 (521 aa).

A propeptide spanning residues 1–219 is cleaved from the precursor; sequence MKSQGQHWYS…GEEELVSQTD (219 aa). DED domains follow at residues 19–97 and 114–187; these read SFRE…HLNC and LFRN…NIEK. Composition is skewed to polar residues over residues 231-248 and 259-268; these read SWQN…TNGA and ASANTLNSET. The interval 231-269 is disordered; sequence SWQNKHAGSNGNRATNGAPSLVSRGMQGASANTLNSETS. Catalysis depends on residues His358 and Cys401.

This sequence belongs to the peptidase C14A family. Heterotetramer that consists of two anti-parallel arranged heterodimers, each one formed by a 23/17 kDa (p23/17) (depending on the splicing events) and a 12 kDa (p12) subunit. Self-associates. Interacts with FADD and CASP8. Found in a Fas signaling complex consisting of FAS, FADD, CASP8 and CASP10. Interacts with RFFL and RNF34; negatively regulate CASP10 through proteasomal degradation. Interacts with RIOK3. Cleavage by granzyme B and autocatalytic activity generate the two active subunits. As to expression, detectable in most tissues. Lowest expression is seen in brain, kidney, prostate, testis and colon.

It carries out the reaction Strict requirement for Asp at position P1 and has a preferred cleavage sequence of Leu-Gln-Thr-Asp-|-Gly.. Involved in the activation cascade of caspases responsible for apoptosis execution. Recruited to both Fas- and TNFR-1 receptors in a FADD dependent manner. May participate in the granzyme B apoptotic pathways. Cleaves and activates effector caspases CASP3, CASP4, CASP6, CASP7, CASP8 and CASP9. Hydrolyzes the small- molecule substrates, Tyr-Val-Ala-Asp-|-AMC and Asp-Glu-Val-Asp-|-AMC. In terms of biological role, isoform 7 can enhance NF-kappaB activity but promotes only slight apoptosis. Functionally, isoform C is proteolytically inactive. This Homo sapiens (Human) protein is Caspase-10 (CASP10).